Reading from the N-terminus, the 570-residue chain is Transmembrane 7 superfamily member 3 (570 aa).

An N-terminal signal peptide occupies residues 1 to 21; it reads MGFLQLLVVAVLASEHRVAGA. Asn-27, Asn-61, Asn-75, Asn-87, and Asn-264 each carry an N-linked (GlcNAc...) asparagine glycan. Transmembrane regions (helical) follow at residues 296–313, 320–342, 347–369, 371–393, 408–430, 437–459, and 479–501; these read VFFTLFALLGFFICFFGH, LFFIGFIIMGFFFYILITRLTPI, NLILTAVTGSVGGMFLVAVWWRF, ILSICMLCVGLVLGFLISSVTFF, FWVTFSCIAILIPVVFMGCLRIL, VIGSYSVVLAIDSYWSTSLSYIT, and PFQTNDFIILAVWGMLAVSGITL.

Widely expressed. Highly expressed in kidney and pancreas.

It is found in the cell membrane. Its function is as follows. Involved in the inhibition of cytokine-induced death of pancreatic beta cells. Involved in the promotion of insulin secretion from pancreatic beta cells. Is a downstream transcriptional target of p53/TP53, and acts as a pro-survival homeostatic factor that attenuates the development of cellular stress. Maintains protein homeostasis and promotes cell survival through attenuation of endoplasmic reticulum (ER) stress and the subsequent induction of unfolded protein response (UPR). The chain is Transmembrane 7 superfamily member 3 (TM7SF3) from Homo sapiens (Human).